A 514-amino-acid chain; its full sequence is Mitochondrial-processing peptidase subunit alpha (514 aa).

The N-terminal 55 residues, 1 to 55 (MLLRKSIPYIKICRDISASVRNNKEIAQKLPLSVPLPMENNSKSIEKGCPPMGRN), are a transit peptide targeting the mitochondrion.

Belongs to the peptidase M16 family. Heterodimer of mppa-1 (alpha) and mppb-1 (beta) subunits, forming the mitochondrial processing protease (MPP) in which mppa-1 is involved in substrate recognition and binding and mppb-1 is the catalytic subunit.

The protein resides in the mitochondrion matrix. Substrate recognition and binding subunit of the essential mitochondrial processing protease (MPP), which cleaves the mitochondrial sequence off newly imported precursors proteins. This is Mitochondrial-processing peptidase subunit alpha from Caenorhabditis elegans.